The following is a 439-amino-acid chain: 3-phosphoshikimate 1-carboxyvinyltransferase (439 aa).

The 3-phosphoshikimate site is built by Lys-27, Ser-28, and Arg-32. Lys-27 is a phosphoenolpyruvate binding site. Gly-101 and Arg-130 together coordinate phosphoenolpyruvate. Ser-175, Gln-177, Asp-326, and Lys-353 together coordinate 3-phosphoshikimate. Gln-177 provides a ligand contact to phosphoenolpyruvate. Asp-326 functions as the Proton acceptor in the catalytic mechanism. The phosphoenolpyruvate site is built by Arg-357 and Arg-399.

This sequence belongs to the EPSP synthase family. As to quaternary structure, monomer.

It is found in the cytoplasm. The enzyme catalyses 3-phosphoshikimate + phosphoenolpyruvate = 5-O-(1-carboxyvinyl)-3-phosphoshikimate + phosphate. It functions in the pathway metabolic intermediate biosynthesis; chorismate biosynthesis; chorismate from D-erythrose 4-phosphate and phosphoenolpyruvate: step 6/7. In terms of biological role, catalyzes the transfer of the enolpyruvyl moiety of phosphoenolpyruvate (PEP) to the 5-hydroxyl of shikimate-3-phosphate (S3P) to produce enolpyruvyl shikimate-3-phosphate and inorganic phosphate. This is 3-phosphoshikimate 1-carboxyvinyltransferase from Synechococcus sp. (strain WH7803).